We begin with the raw amino-acid sequence, 506 residues long: 2-isopropylmalate synthase (506 aa).

The region spanning isoleucine 4–lysine 266 is the Pyruvate carboxyltransferase domain. 4 residues coordinate Mn(2+): aspartate 13, histidine 201, histidine 203, and asparagine 237. The segment at asparagine 390–lysine 506 is regulatory domain.

This sequence belongs to the alpha-IPM synthase/homocitrate synthase family. LeuA type 1 subfamily. Homodimer. It depends on Mn(2+) as a cofactor.

The protein resides in the cytoplasm. The catalysed reaction is 3-methyl-2-oxobutanoate + acetyl-CoA + H2O = (2S)-2-isopropylmalate + CoA + H(+). Its pathway is amino-acid biosynthesis; L-leucine biosynthesis; L-leucine from 3-methyl-2-oxobutanoate: step 1/4. Catalyzes the condensation of the acetyl group of acetyl-CoA with 3-methyl-2-oxobutanoate (2-ketoisovalerate) to form 3-carboxy-3-hydroxy-4-methylpentanoate (2-isopropylmalate). This is 2-isopropylmalate synthase from Bacillus cereus (strain 03BB102).